The chain runs to 187 residues: MDIDPYKEFGSSYQLLNFLPLDFFPELNALVDTATALYEEELTGREHCSPHHTAIRQALVCWEELTRLIAWMSANINSEEVRRVIVAHVNDTWGLKVRQNLWFHLSCLTFGQHTVQEFLVSFGVRIRTPAPYRPPNAPILSTLPEHTVIRRRGSARVVRSPRRRTPSPRRRRSQSPRRRPQSPASNC.

Residues 151–180 (RRGSARVVRSPRRRTPSPRRRRSQSPRRRP) are compositionally biased toward basic residues. Positions 151-187 (RRGSARVVRSPRRRTPSPRRRRSQSPRRRPQSPASNC) are disordered. A phosphoserine; by host mark is found at Ser160, Ser167, and Ser175. 3 repeat units span residues 160–164 (SPRRR), 167–171 (SPRRR), and 175–179 (SPRRR). The 3 X 5 AA repeats of S-P-R-R-R stretch occupies residues 160-179 (SPRRRTPSPRRRRSQSPRRR). A Bipartite nuclear localization signal motif is present at residues 163–180 (RRTPSPRRRRSQSPRRRP). The interval 181 to 187 (QSPASNC) is RNA binding.

It belongs to the orthohepadnavirus core antigen family. As to quaternary structure, homodimerizes, then multimerizes. Interacts with cytosol exposed regions of viral L glycoprotein present in the reticulum-to-Golgi compartment. Interacts with human FLNB. Phosphorylated form interacts with host importin alpha; this interaction depends on the exposure of the NLS, which itself depends upon genome maturation and/or phosphorylation of the capsid protein. Interacts with host NUP153. Phosphorylated by host SRPK1, SRPK2, and maybe protein kinase C or GAPDH. Phosphorylation is critical for pregenomic RNA packaging. Protein kinase C phosphorylation is stimulated by HBx protein and may play a role in transport of the viral genome to the nucleus at the late step during the viral replication cycle.

The protein localises to the virion. The protein resides in the host cytoplasm. In terms of biological role, self assembles to form an icosahedral capsid. Most capsids appear to be large particles with an icosahedral symmetry of T=4 and consist of 240 copies of capsid protein, though a fraction forms smaller T=3 particles consisting of 180 capsid proteins. Entering capsids are transported along microtubules to the nucleus. Phosphorylation of the capsid is thought to induce exposure of nuclear localization signal in the C-terminal portion of the capsid protein that allows binding to the nuclear pore complex via the importin (karyopherin-) alpha and beta. Capsids are imported in intact form through the nuclear pore into the nuclear basket, where it probably binds NUP153. Only capsids that contain the mature viral genome can release the viral DNA and capsid protein into the nucleoplasm. Immature capsids get stuck in the basket. Capsids encapsulate the pre-genomic RNA and the P protein. Pre-genomic RNA is reverse-transcribed into DNA while the capsid is still in the cytoplasm. The capsid can then either be directed to the nucleus, providing more genomes for transcription, or bud through the endoplasmic reticulum to provide new virions. The sequence is that of Capsid protein from Urocitellus parryii kennicottii (ASHV).